A 2477-amino-acid polypeptide reads, in one-letter code: Non-reducing polyketide synthase mapC (2477 aa).

The N-terminal acylcarrier protein transacylase domain (SAT) stretch occupies residues 14-269 (LLFGPQCSEI…HQQTHREGIQ (256 aa)). Residues 403 to 820 (MPPIAITGMA…GSNAALIVRD (418 aa)) enclose the Ketosynthase family 3 (KS3) domain. Catalysis depends on for beta-ketoacyl synthase activity residues cysteine 568, histidine 703, and histidine 742. Residues 930–1233 (LCFGGQNGVT…HRVNLDGSDG (304 aa)) form a malonyl-CoA:ACP transacylase (MAT) domain region. The active-site For acyl/malonyl transferase activity is serine 1017. Residues 1302 to 1435 (QERAGLLRKL…GSVSLCNERS (134 aa)) are N-terminal hotdog fold. The PKS/mFAS DH domain occupies 1302-1612 (QERAGLLRKL…FMSVSIRSLT (311 aa)). Residues 1307-1611 (LLRKLSDGPE…RFMSVSIRSL (305 aa)) form a product template (PT) domain region. The Proton acceptor; for dehydratase activity role is filled by histidine 1336. Residues 1461–1612 (ASNGLKGSTV…FMSVSIRSLT (152 aa)) form a C-terminal hotdog fold region. The Proton donor; for dehydratase activity role is filled by aspartate 1518. Residues 1651–1725 (DSDLVAVQEM…GLTEHIFPGH (75 aa)) enclose the Carrier domain. Serine 1685 is modified (O-(pantetheine 4'-phosphoryl)serine). Residues 1882 to 2117 (PYALEHDLLQ…GFEWVGWTNN (236 aa)) are methyltransferase (CMeT) domain. Catalysis depends on for thioesterase activity residues serine 2267 and aspartate 2421.

It is found in the cytoplasm. It localises to the cytosol. The catalysed reaction is 3 malonyl-CoA + acetyl-CoA + S-adenosyl-L-methionine + H(+) = 5-methylorsellinate + S-adenosyl-L-homocysteine + 3 CO2 + 4 CoA. Its pathway is secondary metabolite biosynthesis; terpenoid biosynthesis. Non-reducing polyketide synthase; part of the gene cluster that mediates the biosynthesis of mycophenolic acid (MPA), the first isolated antibiotic natural product in the world obtained from a culture of Penicillium brevicompactum in 1893. MpaC catalyzes the synthesis of 5-methylorsellinic acid (5MOA) via the condensation of 1 acetyl-CoA starter unit with 3 malonyl-CoA units and one methylation step. The first step of the pathway is the synthesis of 5-methylorsellinic acid (5MOA) by the cytosolic polyketide synthase mpaC. 5MOA is then converted to the phthalide compound 5,7-dihydroxy-4,6-dimethylphthalide (DHMP) by the endoplasmic reticulum-bound cytochrome P450 monooxygenase mpaDE. MpaDE first catalyzes hydroxylation of 5-MOA to 4,6-dihydroxy-2-(hydroxymethyl)-3-methylbenzoic acid (DHMB). MpaDE then acts as a lactone synthase that catalyzes the ring closure to convert DHMB into DHMP. The next step is the prenylation of DHMP by the Golgi apparatus-associated prenyltransferase mpaA to yield farnesyl-DHMP (FDHMP). The ER-bound oxygenase mpaB then mediates the oxidative cleavage the C19-C20 double bond in FDHMP to yield FDHMP-3C via a mycophenolic aldehyde intermediate. The O-methyltransferase mpaG catalyzes the methylation of FDHMP-3C to yield MFDHMP-3C. After the cytosolic methylation of FDHMP-3C, MFDHMP-3C enters into peroxisomes probably via free diffusion due to its low molecular weight. Upon a peroxisomal CoA ligation reaction, catalyzed by a beta-oxidation component enzyme acyl-CoA ligase ACL891, MFDHMP-3C-CoA would then be restricted to peroxisomes for the following beta-oxidation pathway steps. The peroxisomal beta-oxidation machinery than converts MFDHMP-3C-CoA into MPA_CoA, via a beta-oxidation chain-shortening process. Finally mpaH acts as a peroxisomal acyl-CoA hydrolase with high substrate specificity toward MPA-CoA to release the final product MPA. The sequence is that of Non-reducing polyketide synthase mapC from Penicillium roqueforti (strain FM164).